Reading from the N-terminus, the 389-residue chain is S-adenosylmethionine synthase (389 aa).

His-18 provides a ligand contact to ATP. Residue Asp-20 coordinates Mg(2+). Glu-46 is a K(+) binding site. 2 residues coordinate L-methionine: Glu-59 and Gln-103. A flexible loop region spans residues 103-113; it reads QSADIAMGVDS. Residues 168–170, Asp-244, 250–251, Ala-267, and Lys-271 contribute to the ATP site; these read DSK and RK. An L-methionine-binding site is contributed by Asp-244. L-methionine is bound at residue Lys-275.

Belongs to the AdoMet synthase family. In terms of assembly, homotetramer; dimer of dimers. Mg(2+) serves as cofactor. The cofactor is K(+).

The protein localises to the cytoplasm. The enzyme catalyses L-methionine + ATP + H2O = S-adenosyl-L-methionine + phosphate + diphosphate. It functions in the pathway amino-acid biosynthesis; S-adenosyl-L-methionine biosynthesis; S-adenosyl-L-methionine from L-methionine: step 1/1. In terms of biological role, catalyzes the formation of S-adenosylmethionine (AdoMet) from methionine and ATP. The overall synthetic reaction is composed of two sequential steps, AdoMet formation and the subsequent tripolyphosphate hydrolysis which occurs prior to release of AdoMet from the enzyme. In Pelagibacter ubique (strain HTCC1062), this protein is S-adenosylmethionine synthase.